A 185-amino-acid polypeptide reads, in one-letter code: Neuronal vesicle trafficking-associated protein 1 (185 aa).

The Cytoplasmic segment spans residues 1-82 (MVKLGNNFAE…ITEGVTERFK (82 aa)). Residues 83-103 (VSVLVLFALAFLTCVVFLVVY) traverse the membrane as a helical; Signal-anchor for type II membrane protein segment. Topologically, residues 104–185 (KVYKYDRACP…QETEAAEKSA (82 aa)) are lumenal. Residues 129-164 (ESYYTEQDSSAREKFYTVINHYNLAKQSITRSVSPW) are required for GRIP1 interaction.

The protein belongs to the NSG family. Forms a complex with GRIP1, GRIA2 and STX12; controls the intracellular fate of AMPAR and the endosomal sorting of the GRIA2 subunit toward recycling and membrane targeting. Interacts with GRIP1. Interacts with STX12. Interacts with APP; could regulate APP processing. Interacts with FAM171A1. In terms of tissue distribution, widely expressed in brain and spinal cord. Expressed in neurons during maturation and synapse formation.

Its subcellular location is the membrane. The protein localises to the golgi apparatus. It localises to the trans-Golgi network membrane. The protein resides in the endosome membrane. It is found in the cell projection. Its subcellular location is the dendrite. The protein localises to the early endosome membrane. It localises to the late endosome membrane. The protein resides in the lysosome lumen. It is found in the recycling endosome membrane. Its subcellular location is the cytoplasmic vesicle membrane. The protein localises to the golgi stack membrane. It localises to the endosome. The protein resides in the multivesicular body membrane. It is found in the endoplasmic reticulum membrane. Functionally, plays a role in the recycling mechanism in neurons of multiple receptors, including AMPAR, APP and L1CAM and acts at the level of early endosomes to promote sorting of receptors toward a recycling pathway. Regulates sorting and recycling of GRIA2 through interaction with GRIP1 and then contributes to the regulation of synaptic transmission and plasticity by affecting the recycling and targeting of AMPA receptors to the synapse. Is required for faithful sorting of L1CAM to axons by facilitating trafficking from somatodendritic early endosome or the recycling endosome. In an other hand, induces apoptosis via the activation of CASP3 in response to DNA damage. This Rattus norvegicus (Rat) protein is Neuronal vesicle trafficking-associated protein 1.